A 607-amino-acid polypeptide reads, in one-letter code: Chaperone protein DnaK (607 aa).

At Thr-174 the chain carries Phosphothreonine; by autocatalysis. The span at 579 to 592 (AQAQAQQQAGANAG) shows a compositional bias: low complexity. A disordered region spans residues 579–607 (AQAQAQQQAGANAGSDKKDEDVAEAEVVD).

It belongs to the heat shock protein 70 family.

Functionally, acts as a chaperone. In Fusobacterium nucleatum subsp. nucleatum (strain ATCC 25586 / DSM 15643 / BCRC 10681 / CIP 101130 / JCM 8532 / KCTC 2640 / LMG 13131 / VPI 4355), this protein is Chaperone protein DnaK.